We begin with the raw amino-acid sequence, 106 residues long: Large ribosomal subunit protein eL42 (106 aa).

The protein belongs to the eukaryotic ribosomal protein eL42 family.

The protein localises to the cytoplasm. The protein is Large ribosomal subunit protein eL42 (RPL44) of Trypanosoma brucei brucei.